The chain runs to 704 residues: Elongation factor G (704 aa).

Positions 8–290 (ARYRNIGISA…AVIDYLPAPT (283 aa)) constitute a tr-type G domain. GTP contacts are provided by residues 17–24 (AHIDAGKT), 88–92 (DTPGH), and 142–145 (NKMD).

Belongs to the TRAFAC class translation factor GTPase superfamily. Classic translation factor GTPase family. EF-G/EF-2 subfamily.

The protein localises to the cytoplasm. In terms of biological role, catalyzes the GTP-dependent ribosomal translocation step during translation elongation. During this step, the ribosome changes from the pre-translocational (PRE) to the post-translocational (POST) state as the newly formed A-site-bound peptidyl-tRNA and P-site-bound deacylated tRNA move to the P and E sites, respectively. Catalyzes the coordinated movement of the two tRNA molecules, the mRNA and conformational changes in the ribosome. This is Elongation factor G from Pectobacterium atrosepticum (strain SCRI 1043 / ATCC BAA-672) (Erwinia carotovora subsp. atroseptica).